A 1366-amino-acid chain; its full sequence is DNA-directed RNA polymerase subunit beta' (1366 aa).

The segment covering 1–23 (MTSSKPKKSSRVRKTTKNSKKNH) has biased composition (basic residues). Residues 1 to 37 (MTSSKPKKSSRVRKTTKNSKKNHNTMMPLLPKTPPSF) are disordered. 4 residues coordinate Zn(2+): cysteine 248, cysteine 315, cysteine 322, and cysteine 325. The disordered stretch occupies residues 1304 to 1366 (TAILDDPSDE…LQEEGLLSDG (63 aa)). Over residues 1354 to 1366 (LEGLQEEGLLSDG) the composition is skewed to low complexity.

The protein belongs to the RNA polymerase beta' chain family. RpoC2 subfamily. As to quaternary structure, in cyanobacteria the RNAP catalytic core is composed of 2 alpha, 1 beta, 1 beta', 1 gamma and 1 omega subunit. When a sigma factor is associated with the core the holoenzyme is formed, which can initiate transcription. The cofactor is Zn(2+).

The catalysed reaction is RNA(n) + a ribonucleoside 5'-triphosphate = RNA(n+1) + diphosphate. DNA-dependent RNA polymerase catalyzes the transcription of DNA into RNA using the four ribonucleoside triphosphates as substrates. This chain is DNA-directed RNA polymerase subunit beta', found in Prochlorococcus marinus subsp. pastoris (strain CCMP1986 / NIES-2087 / MED4).